The following is a 190-amino-acid chain: Peptidyl-tRNA hydrolase (190 aa).

A tRNA-binding site is contributed by Tyr14. His19 functions as the Proton acceptor in the catalytic mechanism. TRNA contacts are provided by Tyr64, Asn66, and Asn112.

The protein belongs to the PTH family. As to quaternary structure, monomer.

The protein localises to the cytoplasm. The catalysed reaction is an N-acyl-L-alpha-aminoacyl-tRNA + H2O = an N-acyl-L-amino acid + a tRNA + H(+). Hydrolyzes ribosome-free peptidyl-tRNAs (with 1 or more amino acids incorporated), which drop off the ribosome during protein synthesis, or as a result of ribosome stalling. Functionally, catalyzes the release of premature peptidyl moieties from peptidyl-tRNA molecules trapped in stalled 50S ribosomal subunits, and thus maintains levels of free tRNAs and 50S ribosomes. In Chlorobium chlorochromatii (strain CaD3), this protein is Peptidyl-tRNA hydrolase.